The sequence spans 129 residues: Succinate dehydrogenase cytochrome b556 subunit (129 aa).

Topologically, residues 1-26 are cytoplasmic; that stretch reads MIRNVKKQRPVNLDLQTIRFPITAIA. The helical transmembrane segment at 27–52 threads the bilayer; the sequence is SILHRVSGVITFVAVGILLWLLGTSL. The Periplasmic portion of the chain corresponds to 53 to 68; that stretch reads SSPEGFEQASAIMGSF. Residues 69–89 form a helical membrane-spanning segment; sequence FVKFIMWGILTALAYHVVVGI. Histidine 84 serves as a coordination point for heme. Residues 90–108 are Cytoplasmic-facing; that stretch reads RHMMMDFGYLEETFEAGKR. Residues 109-129 form a helical membrane-spanning segment; sequence SAKISFVITVVLSLLAGVLVW.

This sequence belongs to the cytochrome b560 family. Part of an enzyme complex containing four subunits: a flavoprotein, an iron-sulfur protein, plus two membrane-anchoring proteins, SdhC and SdhD. The complex can form homotrimers. Heme is required as a cofactor.

Its subcellular location is the cell inner membrane. The protein operates within carbohydrate metabolism; tricarboxylic acid cycle. Its function is as follows. Membrane-anchoring subunit of succinate dehydrogenase (SDH). This is Succinate dehydrogenase cytochrome b556 subunit (sdhC) from Escherichia coli O157:H7.